Here is a 780-residue protein sequence, read N- to C-terminus: MDEQAGPGVFFSNNHPGAGGAKGLGPLAEAAAAGDGAAAAGAARAQYSLPGILHFLQHEWARFEVERAQWEVERAELQAQIAFLQGERKGQENLKKDLVRRIKMLEYALKQERAKYHKLKYGTELNQGDMKPPSYDSDEGNETEVQPQQNSQLMWKQGRQLLRQYLQEVGYTDTILDVKSKRVRALLGFSSDVTDREDDKNQDSVINGTEAEVKETAMIGKSELTDSASVLDNFKFLESAAADVSDEDEDEDTDGRAKSVIDTSTIVRKKALPDTSEDRDTKEALKEFDFLVTSEEGDNESRSAGDGTDWEKEDQCLTPEAWNVDQGVISKLKEQYKKERKGKKGVKRPNRSKLQDMLANLRDVDELPSLQPSVGSPSRPSSSRLPEQELSRADEVEALTFPPSSGKSFIMGADEALESELGLGELAGLTVANEADSLAYDIANNKDALRKTWNPKFTLRSHFDGIRALAFHPIEPVLITASEDHTLKMWNLQKTAPAKKSTSLDVEPIYTFRAHKGPVLCVVMSSNGEQCYSGGTDGRIQSWSTTNPNVDPYDAYDPSVLRGPLLGHTDAVWGLAYSAAHQRLLSCSADGTLRLWNTTEVAPALSVFNDNQELGIPASVDLVSSDPSHMVASFSKGYTSIFNMETQQRVLTLESNVDSTSSSSCQINRVISHPTLPISITAHEDRHIKFYDNNTGKLIHSMVAHLEAVTSLAVDPNGLYLMSGSHDCSIRLWNLESKTCIQEFTAHRKKFEESIHDVAFHPSKCYIASAGADALAKVFV.

Positions 53-120 form a coiled coil; it reads LHFLQHEWAR…QERAKYHKLK (68 aa). Residues 55–63 are caveolin-binding; that stretch reads FLQHEWARF. Positions 123–150 are disordered; it reads TELNQGDMKPPSYDSDEGNETEVQPQQN. Ser137 is subject to Phosphoserine. The segment at 149–166 is calmodulin-binding; that stretch reads QNSQLMWKQGRQLLRQYL. Thr225 is subject to Phosphothreonine. Phosphoserine occurs at positions 227, 229, 245, and 259. 3 disordered regions span residues 289–312, 334–353, and 364–392; these read DFLV…DWEK, EQYK…NRSK, and VDEL…ELSR. Basic and acidic residues predominate over residues 299-312; it reads NESRSAGDGTDWEK. The span at 338 to 351 shows a compositional bias: basic residues; it reads KERKGKKGVKRPNR. WD repeat units lie at residues 461–500, 514–553, 567–606, 662–701, 704–743, and 750–780; these read SHFD…PAKK, AHKG…VDPY, GHTD…PALS, SSSC…LIHS, AHLE…CIQE, and KFEE…KVFV.

It belongs to the WD repeat striatin family. As to quaternary structure, part of the core of STRIPAK complexes composed of PP2A catalytic and scaffolding subunits, the striatins (PP2A regulatory subunits), the striatin-associated proteins MOB4, STRIP1 and STRIP2, PDCD10 and members of the STE20 kinases, such as STK24 and STK26. Interacts with CTTNBP2; this interaction may regulate dendritic spine distribution of STRN. Activation of glutamate receptors weakens the interaction with CTTNBP2. Mainly expressed in brain but is also expressed at low levels in various tissues such as kidney, spleen, skeletal muscle and lung.

The protein localises to the cytoplasm. Its subcellular location is the membrane. The protein resides in the cell projection. It localises to the dendritic spine. In terms of biological role, calmodulin-binding scaffolding protein which is the center of the striatin-interacting phosphatase and kinase (STRIPAK) complexes. STRIPAK complexes have critical roles in protein (de)phosphorylation and are regulators of multiple signaling pathways including Hippo, MAPK, nuclear receptor and cytoskeleton remodeling. Different types of STRIPAK complexes are involved in a variety of biological processes such as cell growth, differentiation, apoptosis, metabolism and immune regulation. The polypeptide is Striatin (Strn) (Mus musculus (Mouse)).